Consider the following 310-residue polypeptide: HTH-type transcriptional activator TtdR (310 aa).

Residues 6 to 63 (PLAKDLQVLVEIVHSGSFSAAAATLGQTPAFVTKRIQILENTLATTLLNRSARGVALT) form the HTH lysR-type domain. A DNA-binding region (H-T-H motif) is located at residues 23-42 (FSAAAATLGQTPAFVTKRIQ).

This sequence belongs to the LysR transcriptional regulatory family.

Functionally, positive regulator required for L-tartrate-dependent anaerobic growth on glycerol. Induces expression of the ttdA-ttdB-ygjE operon. This is HTH-type transcriptional activator TtdR (ttdR) from Escherichia coli (strain K12).